Reading from the N-terminus, the 189-residue chain is dCTP deaminase (189 aa).

Residues 112–117, 136–138, glutamine 157, tyrosine 171, and glutamine 181 each bind dCTP; these read KSTYAR and TLE. Glutamate 138 (proton donor/acceptor) is an active-site residue.

The protein belongs to the dCTP deaminase family. As to quaternary structure, homotrimer.

It carries out the reaction dCTP + H2O + H(+) = dUTP + NH4(+). It participates in pyrimidine metabolism; dUMP biosynthesis; dUMP from dCTP (dUTP route): step 1/2. Its function is as follows. Catalyzes the deamination of dCTP to dUTP. This chain is dCTP deaminase, found in Teredinibacter turnerae (strain ATCC 39867 / T7901).